Consider the following 470-residue polypeptide: 6-phospho-beta-galactosidase 1 (470 aa).

Q23, H120, N163, E164, and N300 together coordinate D-galactose 6-phosphate. The active-site Proton donor is the E164. E378 acts as the Nucleophile in catalysis. D-galactose 6-phosphate contacts are provided by S434, W435, K441, and Y443.

It belongs to the glycosyl hydrolase 1 family.

It catalyses the reaction a 6-phospho-beta-D-galactoside + H2O = D-galactose 6-phosphate + an alcohol. Its pathway is carbohydrate metabolism; lactose degradation; D-galactose 6-phosphate and beta-D-glucose from lactose 6-phosphate: step 1/1. The polypeptide is 6-phospho-beta-galactosidase 1 (Streptococcus pneumoniae serotype 4 (strain ATCC BAA-334 / TIGR4)).